The chain runs to 502 residues: Cytochrome P450 2J2 (502 aa).

C448 serves as a coordination point for heme.

The protein belongs to the cytochrome P450 family. Requires heme as cofactor. As to expression, highly expressed in heart, present at lower levels in liver, kidney and skeletal muscle (at protein level).

It is found in the endoplasmic reticulum membrane. It localises to the microsome membrane. It catalyses the reaction (5Z,8Z,11Z,14Z)-eicosatetraenoate + reduced [NADPH--hemoprotein reductase] + O2 = 5,6-epoxy-(8Z,11Z,14Z)-eicosatrienoate + oxidized [NADPH--hemoprotein reductase] + H2O + H(+). It carries out the reaction (5Z,8Z,11Z,14Z)-eicosatetraenoate + reduced [NADPH--hemoprotein reductase] + O2 = (8R,9S)-epoxy-(5Z,11Z,14Z)-eicosatrienoate + oxidized [NADPH--hemoprotein reductase] + H2O + H(+). The enzyme catalyses (5Z,8Z,11Z,14Z)-eicosatetraenoate + reduced [NADPH--hemoprotein reductase] + O2 = (8S,9R)-epoxy-(5Z,11Z,14Z)-eicosatrienoate + oxidized [NADPH--hemoprotein reductase] + H2O + H(+). The catalysed reaction is (5Z,8Z,11Z,14Z)-eicosatetraenoate + reduced [NADPH--hemoprotein reductase] + O2 = (11R,12S)-epoxy-(5Z,8Z,14Z)-eicosatrienoate + oxidized [NADPH--hemoprotein reductase] + H2O + H(+). It catalyses the reaction (5Z,8Z,11Z,14Z)-eicosatetraenoate + reduced [NADPH--hemoprotein reductase] + O2 = (11S,12R)-epoxy-(5Z,8Z,14Z)-eicosatrienoate + oxidized [NADPH--hemoprotein reductase] + H2O + H(+). It carries out the reaction (5Z,8Z,11Z,14Z)-eicosatetraenoate + reduced [NADPH--hemoprotein reductase] + O2 = (14R,15S)-epoxy-(5Z,8Z,11Z)-eicosatrienoate + oxidized [NADPH--hemoprotein reductase] + H2O + H(+). The enzyme catalyses (5Z,8Z,11Z,14Z)-eicosatetraenoate + reduced [NADPH--hemoprotein reductase] + O2 = (14S,15R)-epoxy-(5Z,8Z,11Z)-eicosatrienoate + oxidized [NADPH--hemoprotein reductase] + H2O + H(+). The catalysed reaction is (15S)-hydroperoxy-(5Z,8Z,11Z,13E)-eicosatetraenoate = (13S)-hydroxy-(14S,15S)-epoxy-(5Z,8Z,11Z)-eicosatrienoate. It catalyses the reaction (15S)-hydroperoxy-(5Z,8Z,11Z,13E)-eicosatetraenoate = (13R)-hydroxy-(14S,15S)-epoxy-(5Z,8Z,11Z)-eicosatrienoate. It carries out the reaction (5Z,8Z,11Z,14Z,17Z)-eicosapentaenoate + reduced [NADPH--hemoprotein reductase] + O2 = (17R,18S)-epoxy-(5Z,8Z,11Z,14Z)-eicosatetraenoate + oxidized [NADPH--hemoprotein reductase] + H2O + H(+). The enzyme catalyses (5Z,8Z,11Z,14Z,17Z)-eicosapentaenoate + reduced [NADPH--hemoprotein reductase] + O2 = (17S,18R)-epoxy-(5Z,8Z,11Z,14Z)-eicosatetraenoate + oxidized [NADPH--hemoprotein reductase] + H2O + H(+). The catalysed reaction is (4Z,7Z,10Z,13Z,16Z,19Z)-docosahexaenoate + reduced [NADPH--hemoprotein reductase] + O2 = (19R,20S)-epoxy-(4Z,7Z,10Z,13Z,16Z)-docosapentaenoate + oxidized [NADPH--hemoprotein reductase] + H2O + H(+). It catalyses the reaction (4Z,7Z,10Z,13Z,16Z,19Z)-docosahexaenoate + reduced [NADPH--hemoprotein reductase] + O2 = (19S,20R)-epoxy-(4Z,7Z,10Z,13Z,16Z)-docosapentaenoate + oxidized [NADPH--hemoprotein reductase] + H2O + H(+). It carries out the reaction albendazole + reduced [NADPH--hemoprotein reductase] + O2 = hydroxyalbendazole + oxidized [NADPH--hemoprotein reductase] + H2O + H(+). The enzyme catalyses albendazole + reduced [NADPH--hemoprotein reductase] + O2 = albendazole S-oxide + oxidized [NADPH--hemoprotein reductase] + H2O + H(+). The catalysed reaction is fenbendazole + reduced [NADPH--hemoprotein reductase] + O2 = fenbendazole S-oxide + oxidized [NADPH--hemoprotein reductase] + H2O + H(+). Its pathway is lipid metabolism; arachidonate metabolism. Its function is as follows. A cytochrome P450 monooxygenase involved in the metabolism of polyunsaturated fatty acids (PUFA) in the cardiovascular system. Mechanistically, uses molecular oxygen inserting one oxygen atom into a substrate, and reducing the second into a water molecule, with two electrons provided by NADPH via cytochrome P450 reductase (NADPH--hemoprotein reductase). Catalyzes the epoxidation of double bonds of PUFA. Converts arachidonic acid to four regioisomeric epoxyeicosatrienoic acids (EpETrE), likely playing a major role in the epoxidation of endogenous cardiac arachidonic acid pools. In endothelial cells, participates in eicosanoids metabolism by converting hydroperoxide species into hydroxy epoxy metabolites. In combination with 15-lipoxygenase metabolizes arachidonic acid and converts hydroperoxyicosatetraenoates (HpETEs) into hydroxy epoxy eicosatrienoates (HEETs), which are precursors of vasodilatory trihydroxyicosatrienoic acids (THETAs). This hydroperoxide isomerase activity is NADPH- and O2-independent. Catalyzes the monooxygenation of a various xenobiotics, such as danazol, amiodarone, terfenadine, astemizole, thioridazine, tamoxifen, cyclosporin A and nabumetone. Catalyzes hydroxylation of the anthelmintics albendazole and fenbendazole. Catalyzes the sulfoxidation of fenbedazole. The chain is Cytochrome P450 2J2 from Homo sapiens (Human).